The chain runs to 468 residues: 6-phospho-beta-galactosidase (468 aa).

D-galactose 6-phosphate is bound by residues Q19, H116, N159, E160, and N297. Catalysis depends on E160, which acts as the Proton donor. E375 serves as the catalytic Nucleophile. Residues S428, W429, K435, and Y437 each contribute to the D-galactose 6-phosphate site.

It belongs to the glycosyl hydrolase 1 family.

It carries out the reaction a 6-phospho-beta-D-galactoside + H2O = D-galactose 6-phosphate + an alcohol. Its pathway is carbohydrate metabolism; lactose degradation; D-galactose 6-phosphate and beta-D-glucose from lactose 6-phosphate: step 1/1. This is 6-phospho-beta-galactosidase from Streptococcus gordonii (strain Challis / ATCC 35105 / BCRC 15272 / CH1 / DL1 / V288).